The following is a 406-amino-acid chain: Tryptophan synthase beta chain (406 aa).

Lys-95 is modified (N6-(pyridoxal phosphate)lysine).

This sequence belongs to the TrpB family. As to quaternary structure, tetramer of two alpha and two beta chains. Requires pyridoxal 5'-phosphate as cofactor.

It catalyses the reaction (1S,2R)-1-C-(indol-3-yl)glycerol 3-phosphate + L-serine = D-glyceraldehyde 3-phosphate + L-tryptophan + H2O. It participates in amino-acid biosynthesis; L-tryptophan biosynthesis; L-tryptophan from chorismate: step 5/5. The beta subunit is responsible for the synthesis of L-tryptophan from indole and L-serine. The sequence is that of Tryptophan synthase beta chain from Pseudomonas fluorescens (strain ATCC BAA-477 / NRRL B-23932 / Pf-5).